A 347-amino-acid chain; its full sequence is MVAVADWFLTGSDAMPAGQAKDPSEAFSNADAPLGSLVMLASPNGSYDTPFGTKVKTTRPSIANLKTAYVAWLERLKLNPQSRGVFYFCGHGISDGETQYLVADDFGEDEADIWNAVFQLTMTVQATLRKSKASLFYFIDACMELSEEIINQLEDPKALIGGSRRGALTTTDWAIVRATTANRLAYAPDGGVAHFTQALLSALRGHCGVEHPSGNGYSVDVARLRAAISEFLEFLQPEGMADRQKIGKTEGDGNWTVPLHVLSKRPSVMLELDVLPQGFRPIAQAFMEDTALVRDTKPLATGPVRFVREHGEWTYGTNSTDPTSFPEKIYNRKLLTNAAVRRLIKVD.

This is an uncharacterized protein from Sinorhizobium fredii (strain NBRC 101917 / NGR234).